The chain runs to 398 residues: Phosphoglycerate kinase (398 aa).

Residues 21-23 (DFN), R36, 59-62 (HLGR), R119, and R157 each bind substrate. Residues K208, G296, E327, and 354–357 (GGDS) contribute to the ATP site.

The protein belongs to the phosphoglycerate kinase family. As to quaternary structure, monomer.

The protein localises to the cytoplasm. It catalyses the reaction (2R)-3-phosphoglycerate + ATP = (2R)-3-phospho-glyceroyl phosphate + ADP. Its pathway is carbohydrate degradation; glycolysis; pyruvate from D-glyceraldehyde 3-phosphate: step 2/5. The chain is Phosphoglycerate kinase from Streptococcus pneumoniae serotype 2 (strain D39 / NCTC 7466).